The following is a 179-amino-acid chain: Large ribosomal subunit protein uL5 (179 aa).

The protein belongs to the universal ribosomal protein uL5 family. As to quaternary structure, part of the 50S ribosomal subunit; part of the 5S rRNA/L5/L18/L25 subcomplex. Contacts the 5S rRNA and the P site tRNA. Forms a bridge to the 30S subunit in the 70S ribosome.

In terms of biological role, this is one of the proteins that bind and probably mediate the attachment of the 5S RNA into the large ribosomal subunit, where it forms part of the central protuberance. In the 70S ribosome it contacts protein S13 of the 30S subunit (bridge B1b), connecting the 2 subunits; this bridge is implicated in subunit movement. Contacts the P site tRNA; the 5S rRNA and some of its associated proteins might help stabilize positioning of ribosome-bound tRNAs. In Citrifermentans bemidjiense (strain ATCC BAA-1014 / DSM 16622 / JCM 12645 / Bem) (Geobacter bemidjiensis), this protein is Large ribosomal subunit protein uL5.